Consider the following 809-residue polypeptide: Pentatricopeptide repeat-containing protein At1g11290, chloroplastic (809 aa).

The N-terminal 46 residues, 1–46 (MSSQLVQFSTVPQIPNPPSRHRHFLSERNYIPANVYEHPAALLLER), are a transit peptide targeting the chloroplast. PPR repeat units lie at residues 68 to 98 (EHFFQTKLVSLFCRYGSVDEAARVFEPIDSK), 99 to 133 (LNVLYHTMLKGFAKVSDLDKALQFFVRMRYDDVEP), 134 to 168 (VVYNFTYLLKVCGDEAELRVGKEIHGLLVKSGFSL), 169 to 199 (DLFAMTGLENMYAKCRQVNEARKVFDRMPER), 200 to 234 (DLVSWNTIVAGYSQNGMARMALEMVKSMCEENLKP), 235 to 269 (SFITIVSVLPAVSALRLISVGKEIHGYAMRSGFDS), 270 to 300 (LVNISTALVDMYAKCGSLETARQLFDGMLER), 301 to 335 (NVVSWNSMIDAYVQNENPKEAMLIFQKMLDEGVKP), 336 to 370 (TDVSVMGALHACADLGDLERGRFIHKLSVELGLDR), 371 to 401 (NVSVVNSLISMYCKCKEVDTAASMFGKLQSR), 402 to 436 (TLVSWNAMILGFAQNGRPIDALNYFSQMRSRTVKP), 437 to 471 (DTFTYVSVITAIAELSITHHAKWIHGVVMRSCLDK), 472 to 502 (NVFVTTALVDMYAKCGAIMIARLIFDMMSER), 503 to 537 (HVTTWNAMIDGYGTHGFGKAALELFEEMQKGTIKP), 538 to 568 (NGVTFLSVISACSHSGLVEAGLKCFYMMKEN), and 574 to 604 (SMDHYGAMVDLLGRAGRLNEAWDFIMQMPVK). Residues 609–684 (VYGAMLGACQ…TPGCSMVEIK (76 aa)) form a type E motif region. Positions 685–715 (NEVHSFFSGSTAHPDSKKIYAFLEKLICHIK) are type E(+) motif. The segment at 716-809 (EAGYVPDTNL…NGACSCGDYW (94 aa)) is type DYW motif.

The protein belongs to the PPR family. PCMP-H subfamily.

It is found in the plastid. The protein localises to the chloroplast. Functionally, involved in multiple sites RNA editing events in chloroplasts. Involved in the editing of the site 7 of ndhB (ndhB-7) and site 5 of ndhD (ndhD-5) transcripts, which are two plastid-encoded subunits of the chloroplast NAD(P)H dehydrogenase (NDH) complex. Involved in the editing of the site 3 of rpoB (rpoB-3) transcript. Required for the activity of the NDH complex of the photosynthetic electron transport chain. Possesses low endoribonuclease activity in vitro. The polypeptide is Pentatricopeptide repeat-containing protein At1g11290, chloroplastic (PCMP-H40) (Arabidopsis thaliana (Mouse-ear cress)).